A 37-amino-acid chain; its full sequence is Cytochrome b6-f complex subunit 5 (37 aa).

A helical transmembrane segment spans residues 5–25 (LLCGIVLGLIPITLAGLFVAA).

The protein belongs to the PetG family. In terms of assembly, the 4 large subunits of the cytochrome b6-f complex are cytochrome b6, subunit IV (17 kDa polypeptide, PetD), cytochrome f and the Rieske protein, while the 4 small subunits are PetG, PetL, PetM and PetN. The complex functions as a dimer.

The protein localises to the cellular thylakoid membrane. In terms of biological role, component of the cytochrome b6-f complex, which mediates electron transfer between photosystem II (PSII) and photosystem I (PSI), cyclic electron flow around PSI, and state transitions. PetG is required for either the stability or assembly of the cytochrome b6-f complex. The chain is Cytochrome b6-f complex subunit 5 from Cyanothece sp. (strain PCC 7425 / ATCC 29141).